Consider the following 295-residue polypeptide: tRNA-cytidine(32) 2-sulfurtransferase (295 aa).

The short motif at 63 to 68 (SGGKDS) is the PP-loop motif element. 3 residues coordinate [4Fe-4S] cluster: Cys138, Cys141, and Cys229.

It belongs to the TtcA family. In terms of assembly, homodimer. Requires Mg(2+) as cofactor. [4Fe-4S] cluster is required as a cofactor.

The protein localises to the cytoplasm. It carries out the reaction cytidine(32) in tRNA + S-sulfanyl-L-cysteinyl-[cysteine desulfurase] + AH2 + ATP = 2-thiocytidine(32) in tRNA + L-cysteinyl-[cysteine desulfurase] + A + AMP + diphosphate + H(+). It functions in the pathway tRNA modification. Functionally, catalyzes the ATP-dependent 2-thiolation of cytidine in position 32 of tRNA, to form 2-thiocytidine (s(2)C32). The sulfur atoms are provided by the cysteine/cysteine desulfurase (IscS) system. The chain is tRNA-cytidine(32) 2-sulfurtransferase from Mesorhizobium japonicum (strain LMG 29417 / CECT 9101 / MAFF 303099) (Mesorhizobium loti (strain MAFF 303099)).